Reading from the N-terminus, the 127-residue chain is Phosphoribosyl-AMP cyclohydrolase (127 aa).

Asp-83 provides a ligand contact to Mg(2+). Cys-84 is a Zn(2+) binding site. 2 residues coordinate Mg(2+): Asp-85 and Asp-87. The Zn(2+) site is built by Cys-100 and Cys-107.

This sequence belongs to the PRA-CH family. In terms of assembly, homodimer. Mg(2+) serves as cofactor. It depends on Zn(2+) as a cofactor.

The protein resides in the cytoplasm. The catalysed reaction is 1-(5-phospho-beta-D-ribosyl)-5'-AMP + H2O = 1-(5-phospho-beta-D-ribosyl)-5-[(5-phospho-beta-D-ribosylamino)methylideneamino]imidazole-4-carboxamide. It participates in amino-acid biosynthesis; L-histidine biosynthesis; L-histidine from 5-phospho-alpha-D-ribose 1-diphosphate: step 3/9. In terms of biological role, catalyzes the hydrolysis of the adenine ring of phosphoribosyl-AMP. The polypeptide is Phosphoribosyl-AMP cyclohydrolase (Methanocaldococcus jannaschii (strain ATCC 43067 / DSM 2661 / JAL-1 / JCM 10045 / NBRC 100440) (Methanococcus jannaschii)).